A 158-amino-acid chain; its full sequence is MSKEKEEIKIIAQNRKAFHDYFIEETYEAGIELVGTEVKSVRQGKVNLKDSFARVENNEVILYNMHISPYEKGNIFNKDPLRPRKLLLHRHEINKLSGYVSRKGYTLIPTKVYLKRGLVKVELAVAKGKKLFDKREDIARRDAKRELEKQFKEKQLGI.

It belongs to the SmpB family.

Its subcellular location is the cytoplasm. Functionally, required for rescue of stalled ribosomes mediated by trans-translation. Binds to transfer-messenger RNA (tmRNA), required for stable association of tmRNA with ribosomes. tmRNA and SmpB together mimic tRNA shape, replacing the anticodon stem-loop with SmpB. tmRNA is encoded by the ssrA gene; the 2 termini fold to resemble tRNA(Ala) and it encodes a 'tag peptide', a short internal open reading frame. During trans-translation Ala-aminoacylated tmRNA acts like a tRNA, entering the A-site of stalled ribosomes, displacing the stalled mRNA. The ribosome then switches to translate the ORF on the tmRNA; the nascent peptide is terminated with the 'tag peptide' encoded by the tmRNA and targeted for degradation. The ribosome is freed to recommence translation, which seems to be the essential function of trans-translation. The chain is SsrA-binding protein from Caldanaerobacter subterraneus subsp. tengcongensis (strain DSM 15242 / JCM 11007 / NBRC 100824 / MB4) (Thermoanaerobacter tengcongensis).